Reading from the N-terminus, the 204-residue chain is Small ribosomal subunit protein uS4 (204 aa).

One can recognise an S4 RNA-binding domain in the interval 93-156 (SRLSSVLYHS…AKIPILIEAE (64 aa)).

The protein belongs to the universal ribosomal protein uS4 family. As to quaternary structure, part of the 30S ribosomal subunit. Contacts protein S5. The interaction surface between S4 and S5 is involved in control of translational fidelity.

Functionally, one of the primary rRNA binding proteins, it binds directly to 16S rRNA where it nucleates assembly of the body of the 30S subunit. Its function is as follows. With S5 and S12 plays an important role in translational accuracy. This Wolbachia pipientis subsp. Culex pipiens (strain wPip) protein is Small ribosomal subunit protein uS4.